Consider the following 307-residue polypeptide: Ribosomal RNA small subunit methyltransferase A (307 aa).

Asn35, Val37, Gly62, Glu83, Asp113, and Asn136 together coordinate S-adenosyl-L-methionine.

Belongs to the class I-like SAM-binding methyltransferase superfamily. rRNA adenine N(6)-methyltransferase family. RsmA subfamily.

Its subcellular location is the cytoplasm. It catalyses the reaction adenosine(1518)/adenosine(1519) in 16S rRNA + 4 S-adenosyl-L-methionine = N(6)-dimethyladenosine(1518)/N(6)-dimethyladenosine(1519) in 16S rRNA + 4 S-adenosyl-L-homocysteine + 4 H(+). Specifically dimethylates two adjacent adenosines (A1518 and A1519) in the loop of a conserved hairpin near the 3'-end of 16S rRNA in the 30S particle. May play a critical role in biogenesis of 30S subunits. The polypeptide is Ribosomal RNA small subunit methyltransferase A (Bifidobacterium longum (strain DJO10A)).